Reading from the N-terminus, the 235-residue chain is MRPSNREHDQLRPVTITRNFTNYAEGSVLVEFGQTKVICNASIVEGVPRFLKGKNQGWITAEYGMLPRATHSRTEREASKGKQGGRTLEIQRLIGRSLRACIDLKVLGENTITLDCDVIQADGGTRTAAITGSCVAMRDAIHWMVQREKIKKMPVFNYVAAVSVGIYRGQPVLDLDYAEDVLAETDMNVVMNEQGHFIEVQGTAEDNSFNREQLNSMLSLAEIGIPQLIEIQKNA.

Residues arginine 86 and 124–126 contribute to the phosphate site; that span reads GTR.

It belongs to the RNase PH family. Homohexameric ring arranged as a trimer of dimers.

It catalyses the reaction tRNA(n+1) + phosphate = tRNA(n) + a ribonucleoside 5'-diphosphate. Functionally, phosphorolytic 3'-5' exoribonuclease that plays an important role in tRNA 3'-end maturation. Removes nucleotide residues following the 3'-CCA terminus of tRNAs; can also add nucleotides to the ends of RNA molecules by using nucleoside diphosphates as substrates, but this may not be physiologically important. Probably plays a role in initiation of 16S rRNA degradation (leading to ribosome degradation) during starvation. In Legionella pneumophila (strain Corby), this protein is Ribonuclease PH.